The following is a 258-amino-acid chain: Ribosomal protein L11 methyltransferase (258 aa).

S-adenosyl-L-methionine contacts are provided by Thr117, Gly138, Asp160, and Asn201.

It belongs to the methyltransferase superfamily. PrmA family.

It localises to the cytoplasm. It catalyses the reaction L-lysyl-[protein] + 3 S-adenosyl-L-methionine = N(6),N(6),N(6)-trimethyl-L-lysyl-[protein] + 3 S-adenosyl-L-homocysteine + 3 H(+). Functionally, methylates ribosomal protein L11. The sequence is that of Ribosomal protein L11 methyltransferase from Thermosipho melanesiensis (strain DSM 12029 / CIP 104789 / BI429).